Here is a 1709-residue protein sequence, read N- to C-terminus: Hybrid signal transduction histidine kinase L (1709 aa).

Disordered stretches follow at residues 52–192 (SNNN…SPPH), 206–276 (FFSG…NSSD), 413–535 (TSNS…NNSC), and 554–615 (QQQQ…IFNN). Residues 53 to 87 (NNNNNNNNNNNNNNNNNNNNNNNNNNNNNNNNNNN) are compositionally biased toward low complexity. Over residues 88–100 (NEEKSNNETEKTL) the composition is skewed to basic and acidic residues. Residues 106–148 (TTTTTTTNNNNNNNNNNNNNNNNNNNNNNNNNNNNNNNNNNTN) show a composition bias toward low complexity. Polar residues predominate over residues 149–170 (SSNDIYMNSPSSTLSSPGNAGN). Low complexity-rich tracts occupy residues 413 to 466 (TSNS…TPNS), 486 to 535 (NNSP…NNSC), and 554 to 576 (QQQQ…PTTS). Polar residues predominate over residues 585 to 610 (LTINTSFKTSPMSSPKSFNKPSQSPQ). The PAS domain occupies 700–771 (ATRKMVTCIE…ATLTDKKTWN (72 aa)). Residues 770–822 (WNGFIRTRHNNNTLIYFEASISPVLDQFQQILYYNCTKRDVTQKRIDEESKTL) enclose the PAC domain. Positions 837–1059 (MMSHDIRTPM…TFTCILKFKK (223 aa)) constitute a Histidine kinase domain. Residue histidine 840 is modified to Phosphohistidine; by autocatalysis. Disordered regions lie at residues 1068-1112 (LLPA…HQQH) and 1137-1298 (QHQL…PTSP). Composition is skewed to low complexity over residues 1075-1112 (LQQQ…HQQH), 1137-1153 (QHQL…LQQQ), and 1176-1194 (NQHI…QQQQ). Residues 1204 to 1221 (HNSHGHNHHGSHHNHNHQ) show a composition bias toward basic residues. Composition is skewed to polar residues over residues 1244–1257 (NEQQ…NSFS) and 1275–1298 (NISQ…PTSP). Response regulatory domains follow at residues 1312 to 1492 (KMLF…MMYL) and 1570 to 1692 (KVLV…KKYG). At aspartate 1366 the chain carries 4-aspartylphosphate. 2 stretches are compositionally biased toward low complexity: residues 1390–1412 (QHLQ…SELQ) and 1420–1440 (KNSS…SSGG). The segment at 1390–1440 (QHLQQQQEQEQQQQQEQQQSELQKQPDVENKNSSQNNDNNNNNNKSNSSGG) is disordered. Aspartate 1622 carries the post-translational modification 4-aspartylphosphate.

In terms of processing, activation probably requires transfer of a phosphate group between a histidine in the kinase core (transmitter) domain and an aspartate of the receiver domain.

It carries out the reaction ATP + protein L-histidine = ADP + protein N-phospho-L-histidine.. Acts as a receptor histidine kinase for a signal transduction pathway. This protein undergoes an ATP-dependent autophosphorylation at a conserved histidine residue in the kinase core, and a phosphoryl group is then transferred to a conserved aspartate residue in the receiver domain. The chain is Hybrid signal transduction histidine kinase L (dhkL) from Dictyostelium discoideum (Social amoeba).